The following is a 493-amino-acid chain: 3-octaprenyl-4-hydroxybenzoate carboxy-lyase (493 aa).

Asn172 serves as a coordination point for Mn(2+). Prenylated FMN-binding positions include 175-177, 189-191, and 194-195; these read IYR, RWL, and RG. Glu238 contributes to the Mn(2+) binding site. Asp287 functions as the Proton donor in the catalytic mechanism.

The protein belongs to the UbiD family. In terms of assembly, homohexamer. Prenylated FMN is required as a cofactor. The cofactor is Mn(2+).

It localises to the cell membrane. It carries out the reaction a 4-hydroxy-3-(all-trans-polyprenyl)benzoate + H(+) = a 2-(all-trans-polyprenyl)phenol + CO2. Its pathway is cofactor biosynthesis; ubiquinone biosynthesis. Its function is as follows. Catalyzes the decarboxylation of 3-octaprenyl-4-hydroxy benzoate to 2-octaprenylphenol, an intermediate step in ubiquinone biosynthesis. The protein is 3-octaprenyl-4-hydroxybenzoate carboxy-lyase of Shewanella frigidimarina (strain NCIMB 400).